Here is a 187-residue protein sequence, read N- to C-terminus: Crossover junction endodeoxyribonuclease RuvC (187 aa).

Catalysis depends on residues Asp7, Glu67, and Asp140. Asp7, Glu67, and Asp140 together coordinate Mg(2+).

This sequence belongs to the RuvC family. As to quaternary structure, homodimer which binds Holliday junction (HJ) DNA. The HJ becomes 2-fold symmetrical on binding to RuvC with unstacked arms; it has a different conformation from HJ DNA in complex with RuvA. In the full resolvosome a probable DNA-RuvA(4)-RuvB(12)-RuvC(2) complex forms which resolves the HJ. Mg(2+) serves as cofactor.

It is found in the cytoplasm. The catalysed reaction is Endonucleolytic cleavage at a junction such as a reciprocal single-stranded crossover between two homologous DNA duplexes (Holliday junction).. Its function is as follows. The RuvA-RuvB-RuvC complex processes Holliday junction (HJ) DNA during genetic recombination and DNA repair. Endonuclease that resolves HJ intermediates. Cleaves cruciform DNA by making single-stranded nicks across the HJ at symmetrical positions within the homologous arms, yielding a 5'-phosphate and a 3'-hydroxyl group; requires a central core of homology in the junction. The consensus cleavage sequence is 5'-(A/T)TT(C/G)-3'. Cleavage occurs on the 3'-side of the TT dinucleotide at the point of strand exchange. HJ branch migration catalyzed by RuvA-RuvB allows RuvC to scan DNA until it finds its consensus sequence, where it cleaves and resolves the cruciform DNA. In Prosthecochloris aestuarii (strain DSM 271 / SK 413), this protein is Crossover junction endodeoxyribonuclease RuvC.